The sequence spans 182 residues: tRNA-splicing endonuclease (182 aa).

Residues Tyr119, His127, and Lys158 contribute to the active site.

Belongs to the tRNA-intron endonuclease family. Archaeal short subfamily. Homotetramer; although the tetramer contains four active sites, only two participate in the cleavage. Therefore, it should be considered as a dimer of dimers.

It carries out the reaction pretRNA = a 3'-half-tRNA molecule with a 5'-OH end + a 5'-half-tRNA molecule with a 2',3'-cyclic phosphate end + an intron with a 2',3'-cyclic phosphate and a 5'-hydroxyl terminus.. In terms of biological role, endonuclease that removes tRNA introns. Cleaves pre-tRNA at the 5'- and 3'-splice sites to release the intron. The products are an intron and two tRNA half-molecules bearing 2',3' cyclic phosphate and 5'-OH termini. Recognizes a pseudosymmetric substrate in which 2 bulged loops of 3 bases are separated by a stem of 4 bp. In Saccharolobus solfataricus (strain ATCC 35092 / DSM 1617 / JCM 11322 / P2) (Sulfolobus solfataricus), this protein is tRNA-splicing endonuclease.